A 257-amino-acid polypeptide reads, in one-letter code: L-aspartate dehydrogenase (257 aa).

Residues A124 and N180 each coordinate NAD(+). H208 is an active-site residue.

The protein belongs to the L-aspartate dehydrogenase family.

It catalyses the reaction L-aspartate + NADP(+) + H2O = oxaloacetate + NH4(+) + NADPH + H(+). The catalysed reaction is L-aspartate + NAD(+) + H2O = oxaloacetate + NH4(+) + NADH + H(+). It functions in the pathway cofactor biosynthesis; NAD(+) biosynthesis; iminoaspartate from L-aspartate (dehydrogenase route): step 1/1. Its function is as follows. Specifically catalyzes the NAD or NADP-dependent dehydrogenation of L-aspartate to iminoaspartate. The protein is L-aspartate dehydrogenase of Methanothermobacter thermautotrophicus (strain ATCC 29096 / DSM 1053 / JCM 10044 / NBRC 100330 / Delta H) (Methanobacterium thermoautotrophicum).